The chain runs to 269 residues: Thiazole synthase (269 aa).

K112 (schiff-base intermediate with DXP) is an active-site residue. 1-deoxy-D-xylulose 5-phosphate-binding positions include G173, 199–200 (AG), and 221–222 (NT).

It belongs to the ThiG family. As to quaternary structure, homotetramer. Forms heterodimers with either ThiH or ThiS.

It localises to the cytoplasm. The enzyme catalyses [ThiS sulfur-carrier protein]-C-terminal-Gly-aminoethanethioate + 2-iminoacetate + 1-deoxy-D-xylulose 5-phosphate = [ThiS sulfur-carrier protein]-C-terminal Gly-Gly + 2-[(2R,5Z)-2-carboxy-4-methylthiazol-5(2H)-ylidene]ethyl phosphate + 2 H2O + H(+). Its pathway is cofactor biosynthesis; thiamine diphosphate biosynthesis. In terms of biological role, catalyzes the rearrangement of 1-deoxy-D-xylulose 5-phosphate (DXP) to produce the thiazole phosphate moiety of thiamine. Sulfur is provided by the thiocarboxylate moiety of the carrier protein ThiS. In vitro, sulfur can be provided by H(2)S. The chain is Thiazole synthase from Caulobacter vibrioides (strain ATCC 19089 / CIP 103742 / CB 15) (Caulobacter crescentus).